A 445-amino-acid chain; its full sequence is Putrescine hydroxycinnamoyltransferase 1 (445 aa).

Active-site proton acceptor residues include histidine 154 and aspartate 388.

Belongs to the plant acyltransferase family. Expressed in leaves.

In terms of biological role, hydroxycinnamoyl transferase that catalyzes the transfer of an acyl from p-coumaryol-CoA to putrescine, to produce coumaroyl putrescine. The polypeptide is Putrescine hydroxycinnamoyltransferase 1 (Oryza sativa subsp. japonica (Rice)).